Here is a 455-residue protein sequence, read N- to C-terminus: Probable Xaa-Pro aminopeptidase GSTUM_00008071001 (455 aa).

Mn(2+) is bound by residues Asp251, Asp262, Glu386, and Glu426.

The protein belongs to the peptidase M24B family. It depends on Mn(2+) as a cofactor.

The catalysed reaction is Release of any N-terminal amino acid, including proline, that is linked to proline, even from a dipeptide or tripeptide.. Catalyzes the removal of a penultimate prolyl residue from the N-termini of peptides. This is Probable Xaa-Pro aminopeptidase GSTUM_00008071001 from Tuber melanosporum (strain Mel28) (Perigord black truffle).